A 295-amino-acid polypeptide reads, in one-letter code: THO complex subunit 4C (295 aa).

Residues 1 to 67 are disordered; it reads MSDALNMTLD…GPLAVNTRPS (67 aa). Ser-2 is subject to N-acetylserine. A compositionally biased stretch (basic and acidic residues) spans 11-22; it reads EIVKKSKSERSA. Gly residues predominate over residues 38–55; it reads GRGGPNGVVGGGRGGGPV. One can recognise an RRM domain in the interval 107-184; sequence TTVYITNLDQ…RPMKLEILGG (78 aa). Positions 212 to 295 are disordered; the sequence is QGVRGGRVGR…SYHAEAMNIS (84 aa). Gly residues-rich tracts occupy residues 213–227 and 242–267; these read GVRG…GSGP and VTAG…SGGR. The segment covering 271 to 288 has biased composition (basic and acidic residues); the sequence is KPVEKSAADLDKDLESYH.

Belongs to the ALYREF family. Interacts with PARP1.

Its subcellular location is the nucleus. It is found in the nucleoplasm. The protein resides in the nucleolus. Export adapter involved in nuclear export of spliced and unspliced mRNA. In Arabidopsis thaliana (Mouse-ear cress), this protein is THO complex subunit 4C.